A 492-amino-acid polypeptide reads, in one-letter code: Protein nucleotidyltransferase YdiU (492 aa).

The ATP site is built by Gly88, Gly90, Arg91, Lys111, Asp123, Gly124, Arg174, and Arg181. The Proton acceptor role is filled by Asp250. Residues Asn251 and Asp260 each contribute to the Mg(2+) site. Asp260 is an ATP binding site.

This sequence belongs to the SELO family. Mg(2+) serves as cofactor. Mn(2+) is required as a cofactor.

It catalyses the reaction L-seryl-[protein] + ATP = 3-O-(5'-adenylyl)-L-seryl-[protein] + diphosphate. The catalysed reaction is L-threonyl-[protein] + ATP = 3-O-(5'-adenylyl)-L-threonyl-[protein] + diphosphate. The enzyme catalyses L-tyrosyl-[protein] + ATP = O-(5'-adenylyl)-L-tyrosyl-[protein] + diphosphate. It carries out the reaction L-histidyl-[protein] + UTP = N(tele)-(5'-uridylyl)-L-histidyl-[protein] + diphosphate. It catalyses the reaction L-seryl-[protein] + UTP = O-(5'-uridylyl)-L-seryl-[protein] + diphosphate. The catalysed reaction is L-tyrosyl-[protein] + UTP = O-(5'-uridylyl)-L-tyrosyl-[protein] + diphosphate. Functionally, nucleotidyltransferase involved in the post-translational modification of proteins. It can catalyze the addition of adenosine monophosphate (AMP) or uridine monophosphate (UMP) to a protein, resulting in modifications known as AMPylation and UMPylation. The protein is Protein nucleotidyltransferase YdiU of Rhodopseudomonas palustris (strain ATCC BAA-98 / CGA009).